The primary structure comprises 387 residues: MKDVVIVDCIRTPMGRSKGGAFRNVRAEDLSAHLMKSILLRNPNLDPNEIEDIYWGCVQQTLEQGFNIARNAALLAGIPKQVGAVTVNRLCGSSMQALHDASRAIQVGDGDIFIIGGVEHMGHVPMSHGVDFHPGMAKSVAKASGMMGLTAEMLGKLHGISRQQQDEFAARSHRRAHAATVEGRFAKEIVGLEGHDASGARFFYDYDEVIRPETTVETLSQLRPVFDPVNGTVTAGTSSALSDGAAAMLVMSADRAKALGLTPRAKIRAMAVAGCDAAIMGYGPVPATQKALKRAGLTIGDIDLFELNEAFAAQSLPCVKDLGLQDVVDEKVNLNGGAIALGHPLGCSGARISTTLLNLMEEKDATLGVATMCIGLGQGIATVFERV.

C91 acts as the Acyl-thioester intermediate in catalysis. Catalysis depends on proton acceptor residues H343 and C373.

Belongs to the thiolase-like superfamily. Thiolase family. In terms of assembly, heterotetramer of two alpha chains (FadB) and two beta chains (FadA).

The protein localises to the cytoplasm. The catalysed reaction is an acyl-CoA + acetyl-CoA = a 3-oxoacyl-CoA + CoA. It functions in the pathway lipid metabolism; fatty acid beta-oxidation. Catalyzes the final step of fatty acid oxidation in which acetyl-CoA is released and the CoA ester of a fatty acid two carbons shorter is formed. This Aeromonas hydrophila subsp. hydrophila (strain ATCC 7966 / DSM 30187 / BCRC 13018 / CCUG 14551 / JCM 1027 / KCTC 2358 / NCIMB 9240 / NCTC 8049) protein is 3-ketoacyl-CoA thiolase.